The primary structure comprises 500 residues: NAD(P)H-quinone oxidoreductase chain 4, chloroplastic (500 aa).

The next 15 helical transmembrane spans lie at 4 to 24, 35 to 55, 87 to 107, 113 to 130, 134 to 154, 167 to 187, 211 to 231, 242 to 262, 272 to 292, 305 to 325, 330 to 350, 364 to 384, 386 to 406, 416 to 436, and 463 to 483; these read FPWL…IFFL, YTIF…CYHF, IGPI…AWPV, LFNF…GLFS, LLLF…LLSM, FILY…GIGL, IIFY…IPLH, HYST…YGLV, AHSI…IYAA, IAYS…SITD, GALL…FLAG, MGGI…FSMA, LALP…GIIT, ILIT…SLSM, and FLSI…DFIF.

The protein belongs to the complex I subunit 4 family.

The protein resides in the plastid. It localises to the chloroplast thylakoid membrane. It catalyses the reaction a plastoquinone + NADH + (n+1) H(+)(in) = a plastoquinol + NAD(+) + n H(+)(out). It carries out the reaction a plastoquinone + NADPH + (n+1) H(+)(in) = a plastoquinol + NADP(+) + n H(+)(out). In Coffea arabica (Arabian coffee), this protein is NAD(P)H-quinone oxidoreductase chain 4, chloroplastic.